We begin with the raw amino-acid sequence, 504 residues long: Anaerobic nitric oxide reductase transcription regulator NorR (504 aa).

Asp-57 is subject to 4-aspartylphosphate. A Sigma-54 factor interaction domain is found at 187-416 (MIGLSPGMMQ…LEHAIHRAVV (230 aa)). ATP-binding positions include 215–222 (GETGTGKE) and 278–287 (ADNGTLFLDE). The segment at residues 479-498 (WAACARALEMDVANLHRLAK) is a DNA-binding region (H-T-H motif).

Its pathway is nitrogen metabolism; nitric oxide reduction. Required for the expression of anaerobic nitric oxide (NO) reductase, acts as a transcriptional activator for at least the norVW operon. Activation also requires sigma-54. This Enterobacter sp. (strain 638) protein is Anaerobic nitric oxide reductase transcription regulator NorR.